The chain runs to 696 residues: Elongation factor G 2 (696 aa).

In terms of domain architecture, tr-type G spans 5-281 (SKYRNIGIFA…AVVDYLPSPT (277 aa)). Residues 14–21 (AHVDAGKT), 78–82 (DTPGH), and 132–135 (NKLD) contribute to the GTP site.

The protein belongs to the TRAFAC class translation factor GTPase superfamily. Classic translation factor GTPase family. EF-G/EF-2 subfamily.

It is found in the cytoplasm. Functionally, catalyzes the GTP-dependent ribosomal translocation step during translation elongation. During this step, the ribosome changes from the pre-translocational (PRE) to the post-translocational (POST) state as the newly formed A-site-bound peptidyl-tRNA and P-site-bound deacylated tRNA move to the P and E sites, respectively. Catalyzes the coordinated movement of the two tRNA molecules, the mRNA and conformational changes in the ribosome. The sequence is that of Elongation factor G 2 from Vibrio parahaemolyticus serotype O3:K6 (strain RIMD 2210633).